A 465-amino-acid chain; its full sequence is uncharacterized protein (465 aa).

The next 11 membrane-spanning stretches (helical) occupy residues 19 to 39, 50 to 70, 91 to 111, 140 to 160, 164 to 184, 201 to 221, 244 to 264, 288 to 308, 342 to 362, 363 to 383, and 403 to 423; these read VLGP…GEYM, MIAG…VAMI, IVGP…YTML, FIVL…LATL, LVIT…VQFG, PYGW…YLGI, AGIM…SGLM, LMVL…NGCI, IVFL…DQVV, TFSI…MVMF, and LPTV…FLGY.

Belongs to the amino acid-polyamine-organocation (APC) superfamily.

It localises to the cell membrane. Probable amino-acid or metabolite transport protein. This is an uncharacterized protein from Rhizobium meliloti (strain 1021) (Ensifer meliloti).